The chain runs to 79 residues: MAQQRRGGFKRRKKVDYIAANKIEYVDYKDTELLSRFISERGKILPRRVTGTSAKNQRKVTTAIKRARVMALLPFVNED.

It belongs to the bacterial ribosomal protein bS18 family. As to quaternary structure, part of the 30S ribosomal subunit. Forms a tight heterodimer with protein bS6.

Functionally, binds as a heterodimer with protein bS6 to the central domain of the 16S rRNA, where it helps stabilize the platform of the 30S subunit. This is Small ribosomal subunit protein bS18 from Streptococcus suis (strain 98HAH33).